A 394-amino-acid polypeptide reads, in one-letter code: MATAQLQRTPMSALVFPNKISTEHQSLVLVKRLLAVSVSCITYLRGIFPECAYGTRYLDDLCVKILREDKNCPGSTQLVKWMLGCYDALQKKYLRMVVLAVYTNPEDPQTISECYQFKFKYTNNGPLMDFISKNQSNESSMLSTDTKKASILLIRKIYILMQNLGPLPNDVCLTMKLFYYDEVTPPDYQPPGFKDGDCEGVIFEGEPMYLNVGEVSTPFHIFKVKVTTERERMENIDSTILSPKQIKTPFQKILRDKDVEDEQEHYTSDDLDIETKMEEQEKNPASSELEEPSLVCEEDEIMRSKESPDLSISHSQVEQLVNKTSELDMSESKTRSGKVFQNKMANGNQPVKSSKENRKRSQHESGRIVLHHFDSSSQESVPKRRKFSEPKEHI.

The 203-residue stretch at 24–226 (HQSLVLVKRL…TPFHIFKVKV (203 aa)) folds into the HORMA domain. Basic and acidic residues predominate over residues 253 to 282 (ILRDKDVEDEQEHYTSDDLDIETKMEEQEK). The disordered stretch occupies residues 253 to 394 (ILRDKDVEDE…RKFSEPKEHI (142 aa)). Residues 288–300 (ELEEPSLVCEEDE) are compositionally biased toward acidic residues. Polar residues-rich tracts occupy residues 310–324 (LSISHSQVEQLVNKT) and 343–352 (KMANGNQPVK). Over residues 362 to 374 (QHESGRIVLHHFD) the composition is skewed to basic and acidic residues. Position 376 is a phosphoserine (Ser376). The short motif at 383-386 (KRRK) is the Nuclear localization signal element.

As to quaternary structure, interacts with HORMAD2. Interacts with IHO1. Post-translationally, phosphorylated at Ser-377 in a SPO11-dependent manner. In terms of tissue distribution, testis-specific. Over-expressed in carcinomas.

It is found in the nucleus. The protein resides in the chromosome. Its function is as follows. Plays a key role in meiotic progression. Regulates 3 different functions during meiosis: ensures that sufficient numbers of processed DNA double-strand breaks (DSBs) are available for successful homology search by increasing the steady-state numbers of single-stranded DSB ends. Promotes synaptonemal-complex formation independently of its role in homology search. Plays a key role in the male mid-pachytene checkpoint and the female meiotic prophase checkpoint: required for efficient build-up of ATR activity on unsynapsed chromosome regions, a process believed to form the basis of meiotic silencing of unsynapsed chromatin (MSUC) and meiotic prophase quality control in both sexes. This Homo sapiens (Human) protein is HORMA domain-containing protein 1.